A 131-amino-acid chain; its full sequence is Antiholin (131 aa).

Residues 1-15 (MTMIAWMQHFLETDE) lie on the Periplasmic side of the membrane. Cytoplasmic segments follow at residues 1-52 (MTMI…SSFK) and 39-50 (FAKLNPNIKFSS). Residues 16-38 (TKLIYWLTFLMVCMVVDTVLGVL) traverse the membrane as a helical segment. Residues 53 to 75 (IKTGVLIKVSEMILALLAVPFAV) traverse the membrane as a helical segment. At 76–78 (PFP) the chain is on the periplasmic side. Residues 79 to 101 (AGLPLLYTVYTALCVSEIYSIFG) form a helical membrane-spanning segment. At 102-131 (HLRLVDDKSDFLEILENFFKRTSGKNKEDK) the chain is on the cytoplasmic side.

This sequence belongs to the bacteriophage holin family. phi29likevirus holin subfamily. Homomultimer. Interacts with isoform Antiholin; this interaction blocks the holin homomultimerization and delays host cell lysis.

The protein resides in the host cell inner membrane. Functionally, accumulates harmlessly in the cytoplasmic membrane until it reaches a critical concentration that triggers the formation of micron-scale pores (holes) causing host cell membrane disruption and endolysin escape into the periplasmic space. Determines the precise timing of host cell lysis. Participates with the endolysin and spanin proteins in the sequential events which lead to the programmed host cell lysis releasing the mature viral particles from the host cell. Counteracts the aggregation of the holin molecules and thus of pore formation. This chain is Antiholin (14), found in Bacillus subtilis (Bacteriophage PZA).